The chain runs to 624 residues: ATP-dependent RNA helicase MRH4, mitochondrial (624 aa).

Residues 1 to 43 constitute a mitochondrion transit peptide; sequence MSPVASTCLLCEMRTVVWGWQPAVPQPWHFVRFASSARLARRK. The segment at 41 to 120 is disordered; that stretch reads RRKPARMALS…KDAADKKQDG (80 aa). Residues 86 to 119 show a composition bias toward basic and acidic residues; sequence RLPDRPIPRSDAELKRSSSDLNNKEKDAADKKQD. A Q motif motif is present at residues 151–184; that stretch reads TSFDQFPLLPQVREAVYANAFPTLTEISPTPIQR. Positions 212–427 constitute a Helicase ATP-binding domain; sequence EEELFHFDQF…EKKFPEMKRL (216 aa). 225–232 provides a ligand contact to ATP; the sequence is AETGTGKT. The short motif at 374–377 is the DEAD box element; the sequence is DEAD. The Helicase C-terminal domain maps to 438 to 624; the sequence is RVQLGVVDVD…EAMFRGQALI (187 aa).

This sequence belongs to the DEAD box helicase family. MRH4 subfamily.

Its subcellular location is the mitochondrion. It catalyses the reaction ATP + H2O = ADP + phosphate + H(+). Functionally, ATP-binding RNA helicase involved in mitochondrial RNA metabolism. Required for maintenance of mitochondrial DNA. This Ajellomyces capsulatus (strain NAm1 / WU24) (Darling's disease fungus) protein is ATP-dependent RNA helicase MRH4, mitochondrial (MRH4).